Consider the following 550-residue polypeptide: Membrane protein insertase YidC (550 aa).

6 helical membrane passes run 6–26, 333–353, 356–376, 430–450, 469–489, and 504–524; these read LVLF…WLKQ, VVDY…LSWI, VVGN…LMFF, LPIL…LGSV, PYFI…KLNP, and PVIF…YWVV.

Belongs to the OXA1/ALB3/YidC family. Type 1 subfamily. As to quaternary structure, interacts with the Sec translocase complex via SecD. Specifically interacts with transmembrane segments of nascent integral membrane proteins during membrane integration.

The protein localises to the cell inner membrane. Required for the insertion and/or proper folding and/or complex formation of integral membrane proteins into the membrane. Involved in integration of membrane proteins that insert both dependently and independently of the Sec translocase complex, as well as at least some lipoproteins. Aids folding of multispanning membrane proteins. In Aromatoleum aromaticum (strain DSM 19018 / LMG 30748 / EbN1) (Azoarcus sp. (strain EbN1)), this protein is Membrane protein insertase YidC.